The primary structure comprises 148 residues: Large ribosomal subunit protein uL15 (148 aa).

The disordered stretch occupies residues methionine 1–phenylalanine 50. Over residues arginine 21–serine 31 the composition is skewed to gly residues.

Belongs to the universal ribosomal protein uL15 family. Part of the 50S ribosomal subunit.

Its function is as follows. Binds to the 23S rRNA. This Bacteroides fragilis (strain ATCC 25285 / DSM 2151 / CCUG 4856 / JCM 11019 / LMG 10263 / NCTC 9343 / Onslow / VPI 2553 / EN-2) protein is Large ribosomal subunit protein uL15.